The sequence spans 218 residues: NAD(P)H-quinone oxidoreductase subunit U, chloroplastic (218 aa).

The transit peptide at 1 to 53 (MASLSTITQPSLVHIPGESVLHHVPSTCSFPWKPTINTKRIICSPARNSSEVS) directs the protein to the chloroplast. The segment at 47-72 (RNSSEVSAEAETEGGSSTAVDEAPKE) is disordered. The J domain occupies 95 to 159 (DHYGRLGIFR…EERRMYDWSL (65 aa)). The helical transmembrane segment at 197–217 (ILGYFIGAWLVLGVALSVAFN) threads the bilayer.

Part of the chloroplast NDH complex, composed of a mixture of chloroplast and nucleus encoded subunits. Component of the electron donor-binding subcomplex, at least composed of NDHS, NDHT and NDHU.

The protein localises to the plastid. The protein resides in the chloroplast thylakoid membrane. It carries out the reaction a plastoquinone + NADH + (n+1) H(+)(in) = a plastoquinol + NAD(+) + n H(+)(out). The enzyme catalyses a plastoquinone + NADPH + (n+1) H(+)(in) = a plastoquinol + NADP(+) + n H(+)(out). NDH shuttles electrons from NAD(P)H:plastoquinone, via FMN and iron-sulfur (Fe-S) centers, to quinones in the photosynthetic chain and possibly in a chloroplast respiratory chain. The immediate electron acceptor for the enzyme in this species is believed to be plastoquinone. Couples the redox reaction to proton translocation, and thus conserves the redox energy in a proton gradient. This is NAD(P)H-quinone oxidoreductase subunit U, chloroplastic from Arabidopsis thaliana (Mouse-ear cress).